Here is a 367-residue protein sequence, read N- to C-terminus: 1-deoxy-D-xylulose 5-phosphate reductoisomerase (367 aa).

Residues Thr-10, Gly-11, Ser-12, Ile-13, Gly-34, Lys-35, Asn-36, and Asn-112 each coordinate NADPH. 1-deoxy-D-xylulose 5-phosphate is bound at residue Lys-113. Glu-114 is a binding site for NADPH. Asp-138 contributes to the Mn(2+) binding site. 1-deoxy-D-xylulose 5-phosphate contacts are provided by Ser-139, Glu-140, Ser-164, and His-186. Glu-140 is a Mn(2+) binding site. Gly-192 serves as a coordination point for NADPH. Residues Ser-199, Asn-204, Lys-205, and Glu-208 each contribute to the 1-deoxy-D-xylulose 5-phosphate site. Glu-208 serves as a coordination point for Mn(2+).

Belongs to the DXR family. Requires Mg(2+) as cofactor. The cofactor is Mn(2+).

It catalyses the reaction 2-C-methyl-D-erythritol 4-phosphate + NADP(+) = 1-deoxy-D-xylulose 5-phosphate + NADPH + H(+). It participates in isoprenoid biosynthesis; isopentenyl diphosphate biosynthesis via DXP pathway; isopentenyl diphosphate from 1-deoxy-D-xylulose 5-phosphate: step 1/6. Its function is as follows. Catalyzes the NADPH-dependent rearrangement and reduction of 1-deoxy-D-xylulose-5-phosphate (DXP) to 2-C-methyl-D-erythritol 4-phosphate (MEP). The sequence is that of 1-deoxy-D-xylulose 5-phosphate reductoisomerase from Thermus thermophilus (strain ATCC BAA-163 / DSM 7039 / HB27).